The following is a 142-amino-acid chain: Type II secretion system core protein G (142 aa).

The propeptide at 1-8 (MQRRQQSG) is leader sequence. At phenylalanine 9 the chain carries N-methylphenylalanine. Residues 9–29 (FTLIEIMVVVVILGILAALVV) traverse the membrane as a helical segment. The interval 121–142 (SLGADGKEGGSDNDADIGNWDN) is disordered.

Belongs to the GSP G family. In terms of assembly, type II secretion system is composed of four main components: the outer membrane complex, the inner membrane complex, the cytoplasmic secretion ATPase and the periplasm-spanning pseudopilus. Forms homomultimers. Interacts with pseudopilin tip ternary complex made of XcpX, XcpU, XcpV and XcpW. Interacts with PilA. Cleaved by the prepilin peptidase. In terms of processing, methylated by prepilin peptidase at the amino group of the N-terminal phenylalanine once the leader sequence is cleaved.

It localises to the cell inner membrane. Core component of the type II secretion system required for the energy-dependent secretion of extracellular factors such as proteases and toxins from the periplasm. Pseudopilin (pilin-like) protein that polymerizes to form the pseudopilus. Further polymerization triggers pseudopilus growth. Type II pseudopilus confers increased bacterial adhesive capabilities. This chain is Type II secretion system core protein G (xcpT), found in Pseudomonas aeruginosa (strain ATCC 15692 / DSM 22644 / CIP 104116 / JCM 14847 / LMG 12228 / 1C / PRS 101 / PAO1).